The sequence spans 137 residues: Large ribosomal subunit protein uL16 (137 aa).

The segment at 1–20 (MLQPKRTKFRKQQKMRNRGL) is disordered.

Belongs to the universal ribosomal protein uL16 family. As to quaternary structure, part of the 50S ribosomal subunit.

Binds 23S rRNA and is also seen to make contacts with the A and possibly P site tRNAs. The chain is Large ribosomal subunit protein uL16 from Francisella philomiragia subsp. philomiragia (strain ATCC 25017 / CCUG 19701 / FSC 153 / O#319-036).